Here is a 570-residue protein sequence, read N- to C-terminus: Dihydroxy-acid dehydratase (570 aa).

[2Fe-2S] cluster is bound at residue C61. Position 94 (D94) interacts with Mg(2+). C135 serves as a coordination point for [2Fe-2S] cluster. Mg(2+)-binding residues include D136 and K137. Residue K137 is modified to N6-carboxylysine. C207 is a binding site for [2Fe-2S] cluster. Mg(2+) is bound at residue E459. The active-site Proton acceptor is S485.

It belongs to the IlvD/Edd family. As to quaternary structure, homodimer. [2Fe-2S] cluster serves as cofactor. It depends on Mg(2+) as a cofactor.

It carries out the reaction (2R)-2,3-dihydroxy-3-methylbutanoate = 3-methyl-2-oxobutanoate + H2O. It catalyses the reaction (2R,3R)-2,3-dihydroxy-3-methylpentanoate = (S)-3-methyl-2-oxopentanoate + H2O. It functions in the pathway amino-acid biosynthesis; L-isoleucine biosynthesis; L-isoleucine from 2-oxobutanoate: step 3/4. It participates in amino-acid biosynthesis; L-valine biosynthesis; L-valine from pyruvate: step 3/4. Functions in the biosynthesis of branched-chain amino acids. Catalyzes the dehydration of (2R,3R)-2,3-dihydroxy-3-methylpentanoate (2,3-dihydroxy-3-methylvalerate) into 2-oxo-3-methylpentanoate (2-oxo-3-methylvalerate) and of (2R)-2,3-dihydroxy-3-methylbutanoate (2,3-dihydroxyisovalerate) into 2-oxo-3-methylbutanoate (2-oxoisovalerate), the penultimate precursor to L-isoleucine and L-valine, respectively. This chain is Dihydroxy-acid dehydratase, found in Lactococcus lactis subsp. cremoris (strain MG1363).